The following is a 146-amino-acid chain: Angiogenin (146 aa).

An N-terminal signal peptide occupies residues 1 to 24 (MVMGLGLFLLVFMLGLGLTPPTLA). Q25 carries the pyrrolidone carboxylic acid modification. Residue H37 is the Proton acceptor of the active site. Position 45 (R45) interacts with tRNA. Disulfide bonds link C50–C105, C63–C116, and C81–C131. Positions 55-59 (RRRHL) match the Nucleolar localization signal motif. TRNA-binding residues include C105 and I127. The active-site Proton donor is H138.

Belongs to the pancreatic ribonuclease family. Homodimer. Interacts with RNH1; inhibiting ANG ribonuclease activity. Interacts with PCNA.

The protein localises to the secreted. It localises to the nucleus. The protein resides in the nucleolus. Its subcellular location is the cytoplasm. It is found in the stress granule. With respect to regulation, has weak tRNA ribonuclease activity by itself due to partial autoinhibition by its C-terminus, which folds into a short alpha-helix that partially occludes the substrate-binding site. In absence of stress, the ribonuclease activity is inhibited by RNH1 in the cytoplasm. In response to stress, dissociates from RNH1 in the cytoplasm and associates with cytoplasmic ribosomes with vacant A-sites: ribosomes directly activate the tRNA ribonuclease activity of ANG by refolding the C-terminal alpha-helix. In response to stress, the angiogenic activity of ANG is inhibited by RNH1 in the nucleus. Secreted ribonuclease that can either promote or restrict cell proliferation of target cells, depending on the context. Endocytosed in target cells via its receptor PLXNB2 and translocates to the cytoplasm or nucleus. Under stress conditions, localizes to the cytoplasm and promotes the assembly of stress granules (SGs): specifically cleaves a subset of tRNAs within anticodon loops to produce tRNA-derived stress-induced fragments (tiRNAs), resulting in translation repression and inhibition of cell proliferation. tiRNas also prevent formation of apoptosome, thereby promoting cell survival. Preferentially cleaves RNAs between a pyrimidine and an adenosine residue, suggesting that it cleaves the anticodon loop of tRNA(Ala) (32-UUAGCAU-38) after positions 33 and 36. Cleaves a subset of tRNAs, including tRNA(Ala), tRNA(Glu), tRNA(Gly), tRNA(Lys), tRNA(Val), tRNA(His), tRNA(Asp) and tRNA(Sec). Under growth conditions and in differentiated cells, translocates to the nucleus and stimulates ribosomal RNA (rRNA) transcription, including that containing the initiation site sequences of 45S rRNA, thereby promoting cell growth and proliferation. Angiogenin induces vascularization of normal and malignant tissues via its ability to promote rRNA transcription. Involved in hematopoietic stem and progenitor cell (HSPC) growth and survival by promoting rRNA transcription in growth conditions and inhibiting translation in response to stress, respectively. Mediates the crosstalk between myeloid and intestinal epithelial cells to protect the intestinal epithelial barrier integrity: secreted by myeloid cells and promotes intestinal epithelial cells proliferation and survival. Also mediates osteoclast-endothelial cell crosstalk in growing bone: produced by osteoclasts and protects the neighboring vascular cells against senescence by promoting rRNA transcription. This chain is Angiogenin (ANG), found in Macaca mulatta (Rhesus macaque).